A 512-amino-acid polypeptide reads, in one-letter code: 2-isopropylmalate synthase (512 aa).

A Pyruvate carboxyltransferase domain is found at 5–268; the sequence is LIIFDTTLRD…DLNIDTTHIV (264 aa). Asp14, His202, His204, and Asn239 together coordinate Mn(2+). The regulatory domain stretch occupies residues 394–512; it reads AFVSLSQHSE…SQAEKVAAQG (119 aa).

Belongs to the alpha-IPM synthase/homocitrate synthase family. LeuA type 1 subfamily. As to quaternary structure, homodimer. Mn(2+) is required as a cofactor.

It is found in the cytoplasm. The catalysed reaction is 3-methyl-2-oxobutanoate + acetyl-CoA + H2O = (2S)-2-isopropylmalate + CoA + H(+). The protein operates within amino-acid biosynthesis; L-leucine biosynthesis; L-leucine from 3-methyl-2-oxobutanoate: step 1/4. In terms of biological role, catalyzes the condensation of the acetyl group of acetyl-CoA with 3-methyl-2-oxobutanoate (2-ketoisovalerate) to form 3-carboxy-3-hydroxy-4-methylpentanoate (2-isopropylmalate). This is 2-isopropylmalate synthase from Variovorax paradoxus (strain S110).